We begin with the raw amino-acid sequence, 544 residues long: CTP synthase (544 aa).

Residues 1-267 (MTKFVFVTGG…AQRVLEILNL (267 aa)) form an amidoligase domain region. Residue serine 13 participates in CTP binding. Serine 13 is a binding site for UTP. 14-19 (SIGKGI) contacts ATP. Tyrosine 54 lines the L-glutamine pocket. Position 71 (aspartate 71) interacts with ATP. Residues aspartate 71 and glutamate 141 each contribute to the Mg(2+) site. CTP is bound by residues 148–150 (DIE), 188–193 (KTKPTQ), and lysine 224. UTP is bound by residues 188-193 (KTKPTQ) and lysine 224. In terms of domain architecture, Glutamine amidotransferase type-1 spans 292–534 (EIAIVGKYVR…IEAALRSRPQ (243 aa)). Residue glycine 354 coordinates L-glutamine. Cysteine 381 serves as the catalytic Nucleophile; for glutamine hydrolysis. L-glutamine contacts are provided by residues 382-385 (LGMQ), glutamate 405, and arginine 462. Catalysis depends on residues histidine 507 and glutamate 509.

It belongs to the CTP synthase family. Homotetramer.

The enzyme catalyses UTP + L-glutamine + ATP + H2O = CTP + L-glutamate + ADP + phosphate + 2 H(+). It catalyses the reaction L-glutamine + H2O = L-glutamate + NH4(+). It carries out the reaction UTP + NH4(+) + ATP = CTP + ADP + phosphate + 2 H(+). The protein operates within pyrimidine metabolism; CTP biosynthesis via de novo pathway; CTP from UDP: step 2/2. Allosterically activated by GTP, when glutamine is the substrate; GTP has no effect on the reaction when ammonia is the substrate. The allosteric effector GTP functions by stabilizing the protein conformation that binds the tetrahedral intermediate(s) formed during glutamine hydrolysis. Inhibited by the product CTP, via allosteric rather than competitive inhibition. Functionally, catalyzes the ATP-dependent amination of UTP to CTP with either L-glutamine or ammonia as the source of nitrogen. Regulates intracellular CTP levels through interactions with the four ribonucleotide triphosphates. In Synechococcus sp. (strain JA-2-3B'a(2-13)) (Cyanobacteria bacterium Yellowstone B-Prime), this protein is CTP synthase.